Reading from the N-terminus, the 352-residue chain is N-acetyl-gamma-glutamyl-phosphate reductase (352 aa).

The active site involves C155.

It belongs to the NAGSA dehydrogenase family. Type 1 subfamily.

The protein resides in the cytoplasm. The catalysed reaction is N-acetyl-L-glutamate 5-semialdehyde + phosphate + NADP(+) = N-acetyl-L-glutamyl 5-phosphate + NADPH + H(+). It participates in amino-acid biosynthesis; L-arginine biosynthesis; N(2)-acetyl-L-ornithine from L-glutamate: step 3/4. In terms of biological role, catalyzes the NADPH-dependent reduction of N-acetyl-5-glutamyl phosphate to yield N-acetyl-L-glutamate 5-semialdehyde. The polypeptide is N-acetyl-gamma-glutamyl-phosphate reductase (Picosynechococcus sp. (strain ATCC 27264 / PCC 7002 / PR-6) (Agmenellum quadruplicatum)).